A 330-amino-acid polypeptide reads, in one-letter code: Uracil-DNA glycosylase, mitochondrial (330 aa).

The N-terminal 49 residues, methionine 1–arginine 49, are a transit peptide targeting the mitochondrion. Aspartate 173 serves as the catalytic Proton acceptor.

It belongs to the uracil-DNA glycosylase (UDG) superfamily. UNG family.

Its subcellular location is the mitochondrion. The catalysed reaction is Hydrolyzes single-stranded DNA or mismatched double-stranded DNA and polynucleotides, releasing free uracil.. Inhidited by the small peptide uracil-DNA-glycosylase inhibitor (Ugi). Its function is as follows. Excises uracil residues from the DNA which can arise as a result of misincorporation of dUMP residues by DNA polymerase or due to deamination of cytosine. More active on U:G, U:T and U:C mispairs than on U:A pairs. Highly specific for uracil and no activity with 5-substituted uracil or cytosine derivatives. Required for initiation of base excision repair (BER) of uracil. The sequence is that of Uracil-DNA glycosylase, mitochondrial from Arabidopsis thaliana (Mouse-ear cress).